The primary structure comprises 89 residues: Antimicrobial peptide Ar-AMP (89 aa).

The signal sequence occupies residues 1-25; it reads MVNMKSVALIVIVMMAFMMVDPSMG. The region spanning 26 to 68 is the Chitin-binding type-1 domain; the sequence is AGECVQGRCPSGMCCSQFGYCGRGPKYCGRASTTVDHQADAAA. 3 cysteine pairs are disulfide-bonded: C29–C40, C34–C46, and C39–C53. A propeptide spans 56–89 (removed in mature form); sequence ASTTVDHQADAAAAAATKTANNPTDAKLAGAGSP.

Functionally, chitin-binding protein that inhibits the growth of the fungal pathogens B.cinerea, F.culmorum, H.sativum and A.consortiale, but not that of R.solani. Induces morphological changes in the fungal pathogens F.culmorum, H.sativum and R.solani, but not in A.consortiale and B.cinerea. Has antibacterial activity against the Gram-positive bacterium B.subtilis, but lacks antibacterial activity against the Gram-negative bacterium E.coli. This Amaranthus retroflexus (Redroot amaranth) protein is Antimicrobial peptide Ar-AMP.